Reading from the N-terminus, the 554-residue chain is (S)-1-hydroxy-N-methylcanadine 13-hydroxylase CYP82X2 (554 aa).

The chain crosses the membrane as a helical span at residues 23-43 (IISTFIVTIISIVFLYTVLLI). Cys-494 contacts heme.

Belongs to the cytochrome P450 family. Heme serves as cofactor. Highly expressed in capsules. Expressed is stems.

Its subcellular location is the membrane. It catalyses the reaction (S)-1-hydroxy-N-methylcanadine + reduced [NADPH--hemoprotein reductase] + O2 = (13S,14R)-1,13-dihydroxy-N-methylcanadine + oxidized [NADPH--hemoprotein reductase] + H2O + H(+). It participates in alkaloid biosynthesis. In terms of biological role, cytochrome P450 involved in the biosynthesis of the benzylisoquinoline alkaloid noscapine. Converts (S)-1-hydroxy-N-methylcanadine to (13S,14R)-1,13-dihydroxy-N-methylcanadine. The protein is (S)-1-hydroxy-N-methylcanadine 13-hydroxylase CYP82X2 of Papaver somniferum (Opium poppy).